The primary structure comprises 361 residues: Ataxin-3 (361 aa).

A Peptide (Met-Gly) (interchain with G-Cter in ubiquitin) cross-link involves residue M1. The region spanning 1 to 180 (MESIFHEKQE…DCEADQLLQM (180 aa)) is the Josephin domain. C14 (nucleophile) is an active-site residue. The Proton acceptor role is filled by H119. The active site involves N134. K200 participates in a covalent cross-link: Glycyl lysine isopeptide (Lys-Gly) (interchain with G-Cter in ubiquitin). Phosphoserine is present on S219. UIM domains follow at residues 224 to 243 (EDEE…IDME) and 244 to 263 (DEEA…SSRN). A compositionally biased stretch (polar residues) spans 258–278 (QGSSRNISQDMTQTSGTNLTS). Residues 258-338 (QGSSRNISQD…DLGDAMSEED (81 aa)) are disordered. Residues S265 and S272 each carry the phosphoserine modification. A compositionally biased stretch (basic and acidic residues) spans 279–293 (EELRKRREAYFEKQQ). The span at 294–305 (QKQQQQQQQQQQ) shows a compositional bias: low complexity. Residues 306–325 (GDLSGQSSHPCERPATSSGA) are compositionally biased toward polar residues. Phosphoserine is present on S328. The 19-residue stretch at 331–349 (GDAMSEEDMLQAAVTMSLE) folds into the UIM 3 domain.

Interacts with STUB1/CHIP (when monoubiquitinated). Interacts with DNA repair proteins RAD23A and RAD23B. Interacts with BECN1 (via its poly-Gln domain). Interacts with PRKN, UBR2, VCP and tubulin. Short isoform 1 interacts with CASP7. In terms of processing, monoubiquitinated N-terminally by UBE2W, possibly leading to activate the deubiquitinating enzyme activity. In terms of tissue distribution, ubiquitous.

The protein resides in the nucleus matrix. It localises to the nucleus. The protein localises to the lysosome membrane. It carries out the reaction Thiol-dependent hydrolysis of ester, thioester, amide, peptide and isopeptide bonds formed by the C-terminal Gly of ubiquitin (a 76-residue protein attached to proteins as an intracellular targeting signal).. In terms of biological role, deubiquitinating enzyme involved in protein homeostasis maintenance, transcription, cytoskeleton regulation, myogenesis and degradation of misfolded chaperone substrates. Binds long polyubiquitin chains and trims them, while it has weak or no activity against chains of 4 or less ubiquitins. Involved in degradation of misfolded chaperone substrates via its interaction with STUB1/CHIP: recruited to monoubiquitinated STUB1/CHIP, and restricts the length of ubiquitin chain attached to STUB1/CHIP substrates and preventing further chain extension. Interacts with key regulators of transcription and represses transcription: acts as a histone-binding protein that regulates transcription. Acts as a negative regulator of mTORC1 signaling in response to amino acid deprivation by mediating deubiquitination of RHEB, thereby promoting RHEB inactivation by the TSC-TBC complex. Regulates autophagy via the deubiquitination of 'Lys-402' of BECN1 leading to the stabilization of BECN1. The polypeptide is Ataxin-3 (Homo sapiens (Human)).